A 307-amino-acid chain; its full sequence is Ribonuclease HIII (307 aa).

Residues 93–307 (MSVIGSDEVG…ANTQKAKKWL (215 aa)) enclose the RNase H type-2 domain. A divalent metal cation-binding residues include Asp99, Glu100, and Asp204.

Belongs to the RNase HII family. RnhC subfamily. The cofactor is Mn(2+). Mg(2+) is required as a cofactor.

It is found in the cytoplasm. The enzyme catalyses Endonucleolytic cleavage to 5'-phosphomonoester.. Its function is as follows. Endonuclease that specifically degrades the RNA of RNA-DNA hybrids. The chain is Ribonuclease HIII from Bacillus pumilus (strain SAFR-032).